A 467-amino-acid polypeptide reads, in one-letter code: Asparagine--tRNA ligase (467 aa).

This sequence belongs to the class-II aminoacyl-tRNA synthetase family. In terms of assembly, homodimer.

It is found in the cytoplasm. It carries out the reaction tRNA(Asn) + L-asparagine + ATP = L-asparaginyl-tRNA(Asn) + AMP + diphosphate + H(+). In Legionella pneumophila (strain Corby), this protein is Asparagine--tRNA ligase.